A 518-amino-acid chain; its full sequence is Histone deacetylase 1 (518 aa).

The interval 22 to 333 (RRVCYFYDAE…WCYETGVALG (312 aa)) is histone deacetylase. The Proton donor/acceptor role is filled by H153. Zn(2+) is bound by residues D188, H190, and D276. Residues 387–518 (HAPSVQFQER…QDQPSVHQKT (132 aa)) form a disordered region. Residues 401–412 (ELPEQDEDQEDP) show a composition bias toward acidic residues. The span at 413–435 (DERHHADSDVEMDDVKPLDDSGR) shows a compositional bias: basic and acidic residues. The segment covering 503–518 (DNSNKLQDQPSVHQKT) has biased composition (polar residues).

Belongs to the histone deacetylase family. HD Type 1 subfamily. In terms of assembly, interacts with TPR3. Requires Zn(2+) as cofactor. As to expression, expressed in roots and leaves.

It is found in the nucleus. It catalyses the reaction N(6)-acetyl-L-lysyl-[histone] + H2O = L-lysyl-[histone] + acetate. Responsible for the deacetylation of lysine residues on the N-terminal part of the core histones (H2A, H2B, H3 and H4). Histone deacetylation gives a tag for epigenetic repression and plays an important role in transcriptional regulation, cell cycle progression and developmental events. Histone deacetylases act via the formation of large multiprotein complexes. Negatively regulates the expression of the NAC48/NAC6 gene that controls root growth in seedlings. Epigenetically represses the expression of NAC48/NAC6 by deacetylating 'Lys-9' (H3K9ac), 'Lys-14' (H3K14ac) and 'Lys-18' (H3K18ac) of histone H3, and 'Lys-5' (H4K5ac), 'Lys-12' (H4K12ac) and 'Lys-16' (H4K16ac) of histone H4. Functions in the regulation of gene expression in the whole genome. Acts as a chromatin remodeling regulator to promote the formation of a repressive chromatin state. Functions with MODD via its interaction with TPR3, to down-regulates the histone acetylation level at BZIP46 target genes. BZIP46 is a positive regulator of abscisic acid (ABA) signaling and drought stress tolerance. This chain is Histone deacetylase 1, found in Oryza sativa subsp. japonica (Rice).